Reading from the N-terminus, the 520-residue chain is Amine oxidase [flavin-containing] B (520 aa).

An N-acetylserine modification is found at S2. Residues 2–489 (SNKCDVVVVG…TFLERHLPSV (488 aa)) are Cytoplasmic-facing. An N6-acetyllysine modification is found at K52. At C397 the chain carries S-8alpha-FAD cysteine. The chain crosses the membrane as a helical; Anchor for type IV membrane protein span at residues 490-516 (PGLLRLIGLTTIFSATALGFLAHKRGL). At 517–520 (LVRV) the chain is on the mitochondrial intermembrane side.

As to quaternary structure, monomer, homo- or heterodimer (containing two subunits of similar size). Each subunit contains a covalently bound flavin. Enzymatically active as monomer. FAD is required as a cofactor.

It is found in the mitochondrion outer membrane. The enzyme catalyses a secondary aliphatic amine + O2 + H2O = a primary amine + an aldehyde + H2O2. It catalyses the reaction (R)-adrenaline + O2 + H2O = (R)-3,4-dihydroxymandelaldehyde + methylamine + H2O2. It carries out the reaction a primary methyl amine + O2 + H2O = an aldehyde + H2O2 + NH4(+). The catalysed reaction is benzylamine + O2 + H2O = benzaldehyde + H2O2 + NH4(+). The enzyme catalyses dopamine + O2 + H2O = 3,4-dihydroxyphenylacetaldehyde + H2O2 + NH4(+). It catalyses the reaction tyramine + O2 + H2O = (4-hydroxyphenyl)acetaldehyde + H2O2 + NH4(+). It carries out the reaction (R)-noradrenaline + O2 + H2O = (R)-3,4-dihydroxymandelaldehyde + H2O2 + NH4(+). The catalysed reaction is 2-phenylethylamine + O2 + H2O = 2-phenylacetaldehyde + H2O2 + NH4(+). The enzyme catalyses N-acetylputrescine + O2 + H2O = 4-acetamidobutanal + H2O2 + NH4(+). With respect to regulation, inhibited by deprenyl. In terms of biological role, catalyzes the oxidative deamination of primary and some secondary amines such as neurotransmitters, and exogenous amines including the tertiary amine, neurotoxin 1-methyl-4-phenyl-1,2,3,6-tetrahydropyridine (MPTP), with concomitant reduction of oxygen to hydrogen peroxide and participates in the metabolism of neuroactive and vasoactive amines in the central nervous system and peripheral tissues. Preferentially degrades benzylamine and phenylethylamine. This chain is Amine oxidase [flavin-containing] B, found in Homo sapiens (Human).